Here is a 375-residue protein sequence, read N- to C-terminus: Non-structural protein NS5 (375 aa).

In Rottboellia (Sorghum), this protein is Non-structural protein NS5 (NS-5).